A 325-amino-acid polypeptide reads, in one-letter code: GMP reductase (325 aa).

The active-site Thioimidate intermediate is cysteine 173. NADP(+) is bound at residue 202–225; that stretch reads IIADGGIRSHGDIAKSVRFGATMV.

It belongs to the IMPDH/GMPR family. GuaC type 2 subfamily.

It carries out the reaction IMP + NH4(+) + NADP(+) = GMP + NADPH + 2 H(+). In terms of biological role, catalyzes the irreversible NADPH-dependent deamination of GMP to IMP. It functions in the conversion of nucleobase, nucleoside and nucleotide derivatives of G to A nucleotides, and in maintaining the intracellular balance of A and G nucleotides. In Acidovorax ebreus (strain TPSY) (Diaphorobacter sp. (strain TPSY)), this protein is GMP reductase.